The following is a 533-amino-acid chain: Phosphatidylinositol 4-kinase gamma 8 (533 aa).

A PI3K/PI4K catalytic domain is found at Gly-101 to Asp-397. The tract at residues Leu-107–Gly-113 is G-loop. ATP is bound by residues Pro-108 to Ala-114, Lys-129, and Gln-210 to Val-213. The catalytic loop stretch occupies residues Leu-243–Asn-251. The interval Pro-276–Val-302 is activation loop. Asp-278 contributes to the ATP binding site.

It belongs to the PI3/PI4-kinase family. Type II PI4K subfamily.

The enzyme catalyses a 1,2-diacyl-sn-glycero-3-phospho-(1D-myo-inositol) + ATP = a 1,2-diacyl-sn-glycero-3-phospho-(1D-myo-inositol 4-phosphate) + ADP + H(+). Its function is as follows. The phosphorylation of phosphatidylinositol (PI) to PI4P is the first committed step in the generation of phosphatidylinositol 4,5-bisphosphate (PIP2), a precursor of the second messenger inositol 1,4,5-trisphosphate (InsP3). The chain is Phosphatidylinositol 4-kinase gamma 8 (PI4KG8) from Arabidopsis thaliana (Mouse-ear cress).